The chain runs to 222 residues: Putative auxin response factor 23 (222 aa).

A DNA-binding region (TF-B3) is located at residues 126 to 222 (FTKVLTASDT…ETGELRVGIR (97 aa)).

The protein belongs to the ARF family. In terms of assembly, homo and heterodimers.

Its subcellular location is the nucleus. Auxin response factors (ARFs) are transcriptional factors that binds specifically to the DNA sequence 5'-TGTCTC-3' found in the auxin-responsive promoter elements (AuxREs). Could act as transcriptional activator or repressor. Formation of heterodimers with Aux/IAA proteins may alter their ability to modulate early auxin response genes expression. The protein is Putative auxin response factor 23 (ARF23) of Arabidopsis thaliana (Mouse-ear cress).